Here is a 177-residue protein sequence, read N- to C-terminus: Cyclic pyranopterin monophosphate synthase (177 aa).

Substrate-binding positions include 89 to 91 and 125 to 126; these read LCH and ME. D140 is a catalytic residue.

This sequence belongs to the MoaC family. In terms of assembly, homohexamer; trimer of dimers.

It carries out the reaction (8S)-3',8-cyclo-7,8-dihydroguanosine 5'-triphosphate = cyclic pyranopterin phosphate + diphosphate. It functions in the pathway cofactor biosynthesis; molybdopterin biosynthesis. Catalyzes the conversion of (8S)-3',8-cyclo-7,8-dihydroguanosine 5'-triphosphate to cyclic pyranopterin monophosphate (cPMP). This chain is Cyclic pyranopterin monophosphate synthase, found in Streptomyces griseus subsp. griseus (strain JCM 4626 / CBS 651.72 / NBRC 13350 / KCC S-0626 / ISP 5235).